Reading from the N-terminus, the 699-residue chain is Polyribonucleotide nucleotidyltransferase (699 aa).

Positions 485 and 491 each coordinate Mg(2+). Residues 552 to 611 (PRITTIKINPEKIRDVIGKGGAVIRALTEETGTTIELEDDGTVKIASNNGDATREAIRRI) enclose the KH domain. The region spanning 621 to 689 (GRLYTGKVIR…RQGRVRLSIK (69 aa)) is the S1 motif domain.

This sequence belongs to the polyribonucleotide nucleotidyltransferase family. As to quaternary structure, component of the RNA degradosome, which is a multiprotein complex involved in RNA processing and mRNA degradation. It depends on Mg(2+) as a cofactor.

Its subcellular location is the cytoplasm. It catalyses the reaction RNA(n+1) + phosphate = RNA(n) + a ribonucleoside 5'-diphosphate. Its function is as follows. Involved in mRNA degradation. Catalyzes the phosphorolysis of single-stranded polyribonucleotides processively in the 3'- to 5'-direction. In Shewanella amazonensis (strain ATCC BAA-1098 / SB2B), this protein is Polyribonucleotide nucleotidyltransferase.